The primary structure comprises 177 residues: Zinc metalloproteinase-disintegrin-like scutiarin (177 aa).

In terms of domain architecture, Disintegrin spans 1–63 (NPCCDAATCK…ECPADVFHKN (63 aa)). Intrachain disulfides connect C3–C26, C17–C23, C22–C48, C35–C55, C42–C74, C67–C79, C86–C136, C101–C147, C114–C124, and C131–C173. The short motif at 41 to 43 (ECD) is the D/ECD-tripeptide element. 5 residues coordinate Ca(2+): D43, P44, E46, D58, and V59.

The protein belongs to the venom metalloproteinase (M12B) family. P-III subfamily. P-IIIa sub-subfamily. Monomer. Requires Zn(2+) as cofactor. In terms of processing, glycosylated. As to expression, expressed by the venom gland.

The protein resides in the secreted. Functionally, snake venom metalloproteinase that impairs hemostasis in the envenomed animal. This chain is Zinc metalloproteinase-disintegrin-like scutiarin, found in Crotalus scutulatus scutulatus (Mojave rattlesnake).